The chain runs to 105 residues: Small ribosomal subunit protein uS10 (105 aa).

This sequence belongs to the universal ribosomal protein uS10 family. In terms of assembly, part of the 30S ribosomal subunit.

Its function is as follows. Involved in the binding of tRNA to the ribosomes. The protein is Small ribosomal subunit protein uS10 of Francisella tularensis subsp. mediasiatica (strain FSC147).